The chain runs to 91 residues: MSEERKVVASREYVISLRRAYVVSRTKRAKYAVGLIRRFVARHLKVEPSAVKIGQKLNMELWSRGIEKPPRRVRVSVEKYSDGTALVELKE.

It belongs to the eukaryotic ribosomal protein eL31 family.

This is Large ribosomal subunit protein eL31 from Pyrobaculum neutrophilum (strain DSM 2338 / JCM 9278 / NBRC 100436 / V24Sta) (Thermoproteus neutrophilus).